The primary structure comprises 495 residues: Lysine--tRNA ligase (495 aa).

The Mg(2+) site is built by E406 and E413.

This sequence belongs to the class-II aminoacyl-tRNA synthetase family. In terms of assembly, homodimer. Mg(2+) serves as cofactor.

The protein resides in the cytoplasm. The enzyme catalyses tRNA(Lys) + L-lysine + ATP = L-lysyl-tRNA(Lys) + AMP + diphosphate. The sequence is that of Lysine--tRNA ligase from Staphylococcus saprophyticus subsp. saprophyticus (strain ATCC 15305 / DSM 20229 / NCIMB 8711 / NCTC 7292 / S-41).